Here is a 214-residue protein sequence, read N- to C-terminus: Orotate phosphoribosyltransferase (214 aa).

Lys-26 is a 5-phospho-alpha-D-ribose 1-diphosphate binding site. 34-35 (FF) serves as a coordination point for orotate. 5-phospho-alpha-D-ribose 1-diphosphate is bound by residues 72–73 (YK), Arg-98, Lys-99, Lys-102, His-104, and 123–131 (DDVISAGTS). Orotate contacts are provided by Ser-127 and Arg-155.

Belongs to the purine/pyrimidine phosphoribosyltransferase family. PyrE subfamily. As to quaternary structure, homodimer. Requires Mg(2+) as cofactor.

The catalysed reaction is orotidine 5'-phosphate + diphosphate = orotate + 5-phospho-alpha-D-ribose 1-diphosphate. It functions in the pathway pyrimidine metabolism; UMP biosynthesis via de novo pathway; UMP from orotate: step 1/2. Functionally, catalyzes the transfer of a ribosyl phosphate group from 5-phosphoribose 1-diphosphate to orotate, leading to the formation of orotidine monophosphate (OMP). The protein is Orotate phosphoribosyltransferase of Chromobacterium violaceum (strain ATCC 12472 / DSM 30191 / JCM 1249 / CCUG 213 / NBRC 12614 / NCIMB 9131 / NCTC 9757 / MK).